A 451-amino-acid polypeptide reads, in one-letter code: Chromosomal replication initiator protein DnaA (451 aa).

Residues 1 to 72 (MQSIEDIWQE…ANILQEITGR (72 aa)) are domain I, interacts with DnaA modulators. Residues 72 to 108 (RLFDVRFIDGEQEENFEYTVIKPNPALDEDGVEIGKH) form a domain II region. Residues 109–325 (MLNPRYVFDT…GALIRVVAYS (217 aa)) form a domain III, AAA+ region region. Glycine 153, glycine 155, lysine 156, and threonine 157 together coordinate ATP. Residues 326 to 451 (SLVNKDITAG…KNLRKAQNMF (126 aa)) form a domain IV, binds dsDNA region.

The protein belongs to the DnaA family. Oligomerizes as a right-handed, spiral filament on DNA at oriC.

It localises to the cytoplasm. Plays an essential role in the initiation and regulation of chromosomal replication. ATP-DnaA binds to the origin of replication (oriC) to initiate formation of the DNA replication initiation complex once per cell cycle. Binds the DnaA box (a 9 base pair repeat at the origin) and separates the double-stranded (ds)DNA. Forms a right-handed helical filament on oriC DNA; dsDNA binds to the exterior of the filament while single-stranded (ss)DNA is stabiized in the filament's interior. The ATP-DnaA-oriC complex binds and stabilizes one strand of the AT-rich DNA unwinding element (DUE), permitting loading of DNA polymerase. After initiation quickly degrades to an ADP-DnaA complex that is not apt for DNA replication. Binds acidic phospholipids. This is Chromosomal replication initiator protein DnaA from Listeria monocytogenes serotype 4b (strain CLIP80459).